The following is a 429-amino-acid chain: 3-phosphoshikimate 1-carboxyvinyltransferase (429 aa).

3-phosphoshikimate-binding residues include K11, S12, and R16. K11 serves as a coordination point for phosphoenolpyruvate. Phosphoenolpyruvate-binding residues include G82 and R110. 3-phosphoshikimate is bound by residues S155, Q157, D302, and K329. A phosphoenolpyruvate-binding site is contributed by Q157. Residue D302 is the Proton acceptor of the active site. Residues R333 and R385 each coordinate phosphoenolpyruvate.

This sequence belongs to the EPSP synthase family. As to quaternary structure, monomer.

It localises to the cytoplasm. It carries out the reaction 3-phosphoshikimate + phosphoenolpyruvate = 5-O-(1-carboxyvinyl)-3-phosphoshikimate + phosphate. The protein operates within metabolic intermediate biosynthesis; chorismate biosynthesis; chorismate from D-erythrose 4-phosphate and phosphoenolpyruvate: step 6/7. Functionally, catalyzes the transfer of the enolpyruvyl moiety of phosphoenolpyruvate (PEP) to the 5-hydroxyl of shikimate-3-phosphate (S3P) to produce enolpyruvyl shikimate-3-phosphate and inorganic phosphate. The sequence is that of 3-phosphoshikimate 1-carboxyvinyltransferase from Helicobacter pylori (strain Shi470).